The chain runs to 361 residues: Large ribosomal subunit protein uL3 (361 aa).

Basic residues predominate over residues 1 to 14 (MGRGGRRNPGRPRR). 2 disordered regions span residues 1–33 (MGRG…PRIR) and 337–361 (TSQQ…PASA).

This sequence belongs to the universal ribosomal protein uL3 family. Part of the 50S ribosomal subunit. Forms a cluster with proteins L14 and L24e.

In terms of biological role, one of the primary rRNA binding proteins, it binds directly near the 3'-end of the 23S rRNA, where it nucleates assembly of the 50S subunit. The polypeptide is Large ribosomal subunit protein uL3 (Methanopyrus kandleri (strain AV19 / DSM 6324 / JCM 9639 / NBRC 100938)).